Reading from the N-terminus, the 1089-residue chain is Importin subunit beta-3 (1089 aa).

The residue at position 2 (serine 2) is an N-acetylserine. 24 HEAT repeats span residues 6 to 39 (EEVN…EEWI), 44 to 78 (IEYL…ALKA), 96 to 129 (KEVL…IAEC), 138 to 165 (PELL…ILTT), 175 to 207 (INSI…YFKQ), 216 to 252 (LGIL…LVEL), 260 to 295 (MFDQ…FSEN), 304 to 359 (QNYG…ALKL), 361 to 395 (GEYL…SSAA), 399 to 439 (ADVL…STDF), 441 to 481 (PFIQ…FSEF), 484 to 524 (KDIL…AEAA), 526 to 568 (NKFI…GFAV), 571 to 613 (EKFH…CRIL), 615 to 689 (DDFV…ATLL), 692 to 735 (QFAV…LLAA), 742 to 781 (ELVL…IKVM), 788 to 849 (EDQL…LKTT), 852 to 890 (HYLK…IQYG), 898 to 930 (KNAF…CAQY), 938 to 978 (VCIP…LYAY), 986 to 1017 (DTYT…QLIE), 1028 to 1063 (NISA…LLGF), and 1066 to 1089 (SSDA…KWFA). A Phosphothreonine modification is found at threonine 830.

It belongs to the importin beta family. Importin beta-3 subfamily. As to quaternary structure, interacts with Ran (GSP1); interacts specifically with the GTP-bound form of Ran (GTP-Ran), protecting it from GTP hydrolysis and nucleotide exchange. Interacts with RPL25; this interaction is dissociated by binding to Ran-GTP. Interacts with YAP1; this interaction is dissociated by binding to Ran-GTP. Interacts with NOP1; via its rg-NLS. Interacts with SOF1; via its cNLS. Interacts with histones H3 and H4; via their NLS. Interacts with ABF1.

It localises to the cytoplasm. The protein resides in the nucleus. In terms of biological role, functions in nuclear protein import as nuclear transport receptor. Serves as receptor for classical and arginine/glycine-rich nuclear localization signals (cNLS and rg-NLS) in cargo substrates. Its predominant cargo substrate seems to be ribosomal proteins and ribosome biogenesis trans- and cis-acting factors. Required for nuclear transport of YAP1, NOP1 and SOF1. Mediates the nuclear import of histones H3 and H4. Mediates docking of the importin/substrate complex to the nuclear pore complex (NPC) through binding to repeat-containing nucleoporins. The complex is subsequently translocated through the pore by an energy requiring, Ran-dependent mechanism. At the nucleoplasmic side of the NPC, GTP-Ran binding leads to release of the cargo. The importin is re-exported from the nucleus to the cytoplasm where GTP hydrolysis releases Ran from importin. The directionality of nuclear import is thought to be conferred by an asymmetric distribution of the GTP- and GDP-bound forms of Ran between the cytoplasm and nucleus. Its function is as follows. Plays a role in protein secretion. This is Importin subunit beta-3 from Saccharomyces cerevisiae (strain ATCC 204508 / S288c) (Baker's yeast).